The sequence spans 291 residues: Formamidopyrimidine-DNA glycosylase (291 aa).

Residue proline 2 is the Schiff-base intermediate with DNA of the active site. The active-site Proton donor is glutamate 3. The active-site Proton donor; for beta-elimination activity is the lysine 61. 3 residues coordinate DNA: histidine 103, arginine 123, and arginine 165. The segment at 251 to 285 (EVYGRGGQACSRCASTIRRDAFMNRSSFSCPACQP) adopts an FPG-type zinc-finger fold. Arginine 275 (proton donor; for delta-elimination activity) is an active-site residue.

It belongs to the FPG family. As to quaternary structure, monomer. Requires Zn(2+) as cofactor.

The enzyme catalyses Hydrolysis of DNA containing ring-opened 7-methylguanine residues, releasing 2,6-diamino-4-hydroxy-5-(N-methyl)formamidopyrimidine.. It carries out the reaction 2'-deoxyribonucleotide-(2'-deoxyribose 5'-phosphate)-2'-deoxyribonucleotide-DNA = a 3'-end 2'-deoxyribonucleotide-(2,3-dehydro-2,3-deoxyribose 5'-phosphate)-DNA + a 5'-end 5'-phospho-2'-deoxyribonucleoside-DNA + H(+). Functionally, involved in base excision repair of DNA damaged by oxidation or by mutagenic agents. Acts as a DNA glycosylase that recognizes and removes damaged bases. Has a preference for oxidized purines, such as 7,8-dihydro-8-oxoguanine (8-oxoG). Has AP (apurinic/apyrimidinic) lyase activity and introduces nicks in the DNA strand. Cleaves the DNA backbone by beta-delta elimination to generate a single-strand break at the site of the removed base with both 3'- and 5'-phosphates. The polypeptide is Formamidopyrimidine-DNA glycosylase (Parafrankia sp. (strain EAN1pec)).